A 35-amino-acid chain; its full sequence is Kappa-theraphotoxin-Tb1b (35 aa).

3 cysteine pairs are disulfide-bonded: Cys3/Cys18, Cys10/Cys23, and Cys17/Cys30.

This sequence belongs to the neurotoxin 10 (Hwtx-1) family. 58 subfamily. As to quaternary structure, monomer. Expressed by the venom gland.

The protein localises to the secreted. Low-affinity blocker of Kv4.2/KCND2 voltage-gated potassium channels. Is presumed to shift the voltage-dependence of channel activation to more depolarized potentials and to bind to the S3-S4 linker region of the voltage sensor domain. The polypeptide is Kappa-theraphotoxin-Tb1b (Theraphosa blondi (Goliath birdeating spider)).